Reading from the N-terminus, the 396-residue chain is MAKAKFERTKPHVNIGTIGHVDHGKTTTTAAITKVLADAYPELNEAFAFDAIDKAPEEKERGITINISHVEYQTEKRHYAHVDAPGHADYIKNMITGAAQMDGAILVVAATDGPMPQTREHVLLARQVGVPYILVALNKCDMVDDEEIIELVEMEVRELLAEQDYDEDAPIVHISALKALEGDEKWAGQILELMQACDDNIPDPVRETDKPFLMPIEDIFTITGRGTVVTGRVERGTLNVNDDVEIIGIKEKATQTTVTGIEMFRKLLDSAEAGDNCGLLLRGIKREDVERGQVVVKPGAYTPHTEFEGSVYVLSKDEGGRHTPFFDNYRPQFYFRTTDVTGVVKLPEGVEMVMPGDNVDMSVTLIQPVAMDEGLRFAIREGSRTVGAGRVTKIIK.

Residues 10-205 form the tr-type G domain; it reads KPHVNIGTIG…ACDDNIPDPV (196 aa). Residues 19-26 form a G1 region; sequence GHVDHGKT. A GTP-binding site is contributed by 19–26; it reads GHVDHGKT. Thr-26 contributes to the Mg(2+) binding site. The G2 stretch occupies residues 62-66; that stretch reads GITIN. The G3 stretch occupies residues 83 to 86; the sequence is DAPG. Residues 83 to 87 and 138 to 141 each bind GTP; these read DAPGH and NKCD. The tract at residues 138 to 141 is G4; it reads NKCD. Positions 175 to 177 are G5; the sequence is SAL.

This sequence belongs to the TRAFAC class translation factor GTPase superfamily. Classic translation factor GTPase family. EF-Tu/EF-1A subfamily. Monomer.

Its subcellular location is the cytoplasm. The catalysed reaction is GTP + H2O = GDP + phosphate + H(+). Its function is as follows. GTP hydrolase that promotes the GTP-dependent binding of aminoacyl-tRNA to the A-site of ribosomes during protein biosynthesis. In Corynebacterium efficiens (strain DSM 44549 / YS-314 / AJ 12310 / JCM 11189 / NBRC 100395), this protein is Elongation factor Tu.